A 203-amino-acid chain; its full sequence is ATP synthase subunit delta, chloroplastic (203 aa).

It belongs to the ATPase delta chain family. F-type ATPases have 2 components, F(1) - the catalytic core - and F(0) - the membrane proton channel. F(1) has five subunits: alpha(3), beta(3), gamma(1), delta(1), epsilon(1). CF(0) has four main subunits: a(1), b(1), b'(1) and c(10-14). The alpha and beta chains form an alternating ring which encloses part of the gamma chain. F(1) is attached to F(0) by a central stalk formed by the gamma and epsilon chains, while a peripheral stalk is formed by the delta, b and b' chains.

It localises to the plastid. The protein localises to the chloroplast thylakoid membrane. F(1)F(0) ATP synthase produces ATP from ADP in the presence of a proton or sodium gradient. F-type ATPases consist of two structural domains, F(1) containing the extramembraneous catalytic core and F(0) containing the membrane proton channel, linked together by a central stalk and a peripheral stalk. During catalysis, ATP synthesis in the catalytic domain of F(1) is coupled via a rotary mechanism of the central stalk subunits to proton translocation. Its function is as follows. This protein is part of the stalk that links CF(0) to CF(1). It either transmits conformational changes from CF(0) to CF(1) or is implicated in proton conduction. This is ATP synthase subunit delta, chloroplastic from Heterosigma akashiwo (strain NIES-293 / 8280G21-1).